The sequence spans 464 residues: Molybdate transporter 2 (464 aa).

The Tonoplast targeting signal signature appears at Leu8–Leu9. The next 9 helical transmembrane spans lie at Leu33 to Val53, Leu62 to Val82, Leu116 to Val136, Ile172 to Ser192, Leu223 to Ile243, Val309 to Cys329, Ser348 to Val368, Phe374 to Ser394, and Phe404 to Gly424.

The protein belongs to the SLC26A/SulP transporter (TC 2.A.53) family. In terms of tissue distribution, expressed in leaves. Not detected in roots, shoots and seeds.

The protein localises to the vacuole membrane. Molybdate transporter required for vacuolar molybdate export during senescence. The polypeptide is Molybdate transporter 2 (MOT2) (Arabidopsis thaliana (Mouse-ear cress)).